The sequence spans 1262 residues: Tau-tubulin kinase homolog Asator (1262 aa).

The interval 13-35 is disordered; it reads NASAPDDGNQSCQPSSKQDQYLS. A compositionally biased stretch (polar residues) spans 20-35; the sequence is GNQSCQPSSKQDQYLS. The region spanning 173-436 is the Protein kinase domain; the sequence is WKVVRKIGGG…MLIGLFERCM (264 aa). ATP is bound by residues 179 to 187 and K202; that span reads IGGGGFGEI. Residue D293 is the Proton acceptor of the active site. Disordered stretches follow at residues 662 to 724, 755 to 792, and 984 to 1003; these read TVTN…TSNA, RSAT…ARSS, and KDSA…SRHR. A compositionally biased stretch (basic and acidic residues) spans 667–679; that stretch reads KTSEVNRSTEEQK. Positions 755-776 are enriched in polar residues; it reads RSATSTNLRPSSSASQRINSGS.

It belongs to the protein kinase superfamily. CK1 Ser/Thr protein kinase family. In terms of assembly, interacts with Mgtor. Mg(2+) serves as cofactor. As to expression, detected in larval brain.

It is found in the cytoplasm. Its subcellular location is the cytoskeleton. It localises to the spindle. It catalyses the reaction L-seryl-[protein] + ATP = O-phospho-L-seryl-[protein] + ADP + H(+). The enzyme catalyses L-threonyl-[protein] + ATP = O-phospho-L-threonyl-[protein] + ADP + H(+). In terms of biological role, probable serine/threonine protein kinase. The sequence is that of Tau-tubulin kinase homolog Asator from Drosophila melanogaster (Fruit fly).